The chain runs to 504 residues: Maturase K (504 aa).

It belongs to the intron maturase 2 family. MatK subfamily.

Its subcellular location is the plastid. It is found in the chloroplast. In terms of biological role, usually encoded in the trnK tRNA gene intron. Probably assists in splicing its own and other chloroplast group II introns. This Cynophalla hastata (Broadleaf caper) protein is Maturase K.